Consider the following 366-residue polypeptide: G-protein coupled receptor 183 (366 aa).

Over 1 to 37 (MQVMRTFNQPPTSSHPTPTLNDSDTCITLYNHRGYAR) the chain is Extracellular. Asparagine 21 is a glycosylation site (N-linked (GlcNAc...) asparagine). A helical transmembrane segment spans residues 38-63 (VLMPLFYCIVFFVGLLGNALAFHIIR). Over 64–83 (PNVKKINSTTLYSANLVISD) the chain is Cytoplasmic. The helical transmembrane segment at 84 to 101 (ILFTLSLPLRIIYYALGF) threads the bilayer. Topologically, residues 102 to 111 (HWPLGETLCK) are extracellular. A disulfide bridge connects residues cysteine 110 and cysteine 188. A helical transmembrane segment spans residues 112-133 (IVGLIFYINTYAGVNFMTCLSV). Over 134–155 (DRFIAVVLPLRFARFRKVSNVR) the chain is Cytoplasmic. Residues 156 to 174 (YICVGVWLLVLMQTLPLLS) traverse the membrane as a helical segment. Over 175-199 (MPMTNEEPDGFITCMEYPNFEPVPN) the chain is Extracellular. The helical transmembrane segment at 200–222 (ISYILIGAVFLGYGVPVVTILVC) threads the bilayer. Over 223-248 (YSILCCKLRLAAKANQLTDKSGRSQK) the chain is Cytoplasmic. The helical transmembrane segment at 249–272 (AIGVICCVSLVFVVCFSPYHIDLL) threads the bilayer. At 273-292 (QYMIRKLIYTPDCAELTAFQ) the chain is on the extracellular side. A helical transmembrane segment spans residues 293-317 (ISLHFTVCLMNLNSCLDPFIYFFAC). Residues 318–366 (KGYKTKVLKILKRQVSVSFSSAARTLPEGLSRDISDGNKIHLNSTRHKE) are Cytoplasmic-facing.

The protein belongs to the G-protein coupled receptor 1 family.

It localises to the cell membrane. G-protein coupled receptor expressed in lymphocytes that acts as a chemotactic receptor for B-cells, T-cells, splenic dendritic cells, monocytes/macrophages and astrocytes. Receptor for oxysterol 7-alpha,25-dihydroxycholesterol (7-alpha,25-OHC) and other related oxysterols. Mediates cell positioning and movement of a number of cells by binding the 7-alpha,25-OHC ligand that forms a chemotactic gradient. Binding of 7-alpha,25-OHC mediates the correct localization of B-cells during humoral immune responses. This chain is G-protein coupled receptor 183 (gpr183), found in Salmo salar (Atlantic salmon).